Consider the following 121-residue polypeptide: Non-structural protein 8 (121 aa).

The N-terminal stretch at 1 to 15 (MKLLIVFGLLASVYC) is a signal peptide. The SARS ORF8 Ig-like domain occupies 19–121 (ECSIQECCEN…HDVRVVLDFI (103 aa)). 3 cysteine pairs are disulfide-bonded: Cys-25–Cys-90, Cys-37–Cys-102, and Cys-61–Cys-83.

The chain is Non-structural protein 8 from Bat coronavirus HKU3 (BtCoV).